A 372-amino-acid chain; its full sequence is MDKLRVLYDEFVTISKDNLERETGLSASDVDMDFDLNIFMTLVPVLEKKVCVITPTIEDDKIVTMMKYCSYQSFSFWFLKSGAVVKSVYNKLDDVEKEKFVATFRDMLLNVQTLISLNSMYTRLRQDTEDIVSDSKKIIEIVSHLRASTTENAAYQVLQQNNSFIISTLNKILSDENYLLKIIAVFDSKLISEKETLNEYKQLYTISSESLVYGIRCVSNLDISSVQLSNNKYVLFVKKMLPKIILFQNNDINAQQFANVISKIYTLIYRQLTSNVDVGCLLTDTIESTKTKISIEKIKQTGINNVQSLIKFISDNKKEYKTIISEEYLSKEDRIITILQNIVNEHDIKYDNKLLNMRDLIVTFRERYSYKF.

The protein belongs to the orthopoxvirus OPG132 family.

It localises to the host cytoplasm. The protein localises to the virion. In terms of biological role, lipid-bound viral membrane assembly protein that plays an essential role in immature virion (IV) to mature virion (MV) transition. Functions in both crescent-shaped viral membranes formation and its enclosure to form immature virions. In addition, participates in targeting mature virion proteins to sites of virion assembly to ensure their correct localization. This is Virion morphogenesis protein OPG132 (OPG132) from Monkeypox virus.